Here is a 305-residue protein sequence, read N- to C-terminus: Phosphoribosylaminoimidazole-succinocarboxamide synthase (305 aa).

This sequence belongs to the SAICAR synthetase family.

The enzyme catalyses 5-amino-1-(5-phospho-D-ribosyl)imidazole-4-carboxylate + L-aspartate + ATP = (2S)-2-[5-amino-1-(5-phospho-beta-D-ribosyl)imidazole-4-carboxamido]succinate + ADP + phosphate + 2 H(+). It participates in purine metabolism; IMP biosynthesis via de novo pathway; 5-amino-1-(5-phospho-D-ribosyl)imidazole-4-carboxamide from 5-amino-1-(5-phospho-D-ribosyl)imidazole-4-carboxylate: step 1/2. The sequence is that of Phosphoribosylaminoimidazole-succinocarboxamide synthase from Polaromonas naphthalenivorans (strain CJ2).